The primary structure comprises 192 residues: Large ribosomal subunit protein bL9 (192 aa).

The disordered stretch occupies residues 172–192 (DALRPEDFFDPEADGVDEDEA). Residues 179 to 192 (FFDPEADGVDEDEA) show a composition bias toward acidic residues.

Belongs to the bacterial ribosomal protein bL9 family.

Its function is as follows. Binds to the 23S rRNA. The sequence is that of Large ribosomal subunit protein bL9 from Rhizobium leguminosarum bv. trifolii (strain WSM2304).